Consider the following 346-residue polypeptide: NADH-ubiquinone oxidoreductase chain 2 (346 aa).

A run of 11 helical transmembrane segments spans residues 1–21 (MNPH…TITI), 25–45 (HWIM…PLIS), 60–80 (FLVQ…NAWA), 96–116 (MLLT…FWFP), 124–144 (LTTA…ILLM), 149–169 (LNPT…GWMG), 178–198 (ILAF…IYNP), 200–220 (LTLL…LSLN), 242–262 (AALM…GFMP), 274–294 (EMTT…FFYL), and 325–345 (IAIL…ILAA).

This sequence belongs to the complex I subunit 2 family.

Its subcellular location is the mitochondrion inner membrane. The enzyme catalyses a ubiquinone + NADH + 5 H(+)(in) = a ubiquinol + NAD(+) + 4 H(+)(out). In terms of biological role, core subunit of the mitochondrial membrane respiratory chain NADH dehydrogenase (Complex I) that is believed to belong to the minimal assembly required for catalysis. Complex I functions in the transfer of electrons from NADH to the respiratory chain. The immediate electron acceptor for the enzyme is believed to be ubiquinone. The chain is NADH-ubiquinone oxidoreductase chain 2 (MT-ND2) from Struthio camelus (Common ostrich).